The sequence spans 214 residues: Small ribosomal subunit protein uS5 (214 aa).

Positions 54 to 117 constitute an S5 DRBM domain; it reads LKYEVMDIKI…KNAKMNIIPV (64 aa).

Belongs to the universal ribosomal protein uS5 family. As to quaternary structure, part of the 30S ribosomal subunit. Contacts protein S4.

Functionally, with S4 and S12 plays an important role in translational accuracy. This chain is Small ribosomal subunit protein uS5, found in Sulfurisphaera tokodaii (strain DSM 16993 / JCM 10545 / NBRC 100140 / 7) (Sulfolobus tokodaii).